We begin with the raw amino-acid sequence, 887 residues long: Alanine--tRNA ligase (887 aa).

Zn(2+) contacts are provided by histidine 581, histidine 585, cysteine 683, and histidine 687.

This sequence belongs to the class-II aminoacyl-tRNA synthetase family. Zn(2+) is required as a cofactor.

Its subcellular location is the cytoplasm. It carries out the reaction tRNA(Ala) + L-alanine + ATP = L-alanyl-tRNA(Ala) + AMP + diphosphate. Its function is as follows. Catalyzes the attachment of alanine to tRNA(Ala) in a two-step reaction: alanine is first activated by ATP to form Ala-AMP and then transferred to the acceptor end of tRNA(Ala). Also edits incorrectly charged Ser-tRNA(Ala) and Gly-tRNA(Ala) via its editing domain. This is Alanine--tRNA ligase from Ehrlichia canis (strain Jake).